Here is a 271-residue protein sequence, read N- to C-terminus: MKCTGVLQLSAAKKRQKTIISSCYHEGALKVSRPIYLEKDLPFLYLIHVGGGYVDGDVYLTNLDVEEEAELAVTTQSATKVYKTPKKPVVQQTNIHLKKGSVLEYLLDPLISYKGARFIQETTVHIEEDSGFFYSDVITPGWAEDGSLFPYDWIRSKLKVYKKDRLVLFDHLRLEPDEDMSGMLQMDGYTHIGTFLIFHQKADKTFLDRLYDEMEAFDSDVRFGMTSLPASGIILRILARSTGIIENMISRAHSFARRELLGKNGVTWRKY.

Belongs to the UreD family. As to quaternary structure, ureD, UreF and UreG form a complex that acts as a GTP-hydrolysis-dependent molecular chaperone, activating the urease apoprotein by helping to assemble the nickel containing metallocenter of UreC. The UreE protein probably delivers the nickel.

Its subcellular location is the cytoplasm. Its function is as follows. Required for maturation of urease via the functional incorporation of the urease nickel metallocenter. The protein is Urease accessory protein UreD of Bacillus sp. (strain TB-90).